The following is a 403-amino-acid chain: S-adenosylmethionine synthase (403 aa).

H17 contacts ATP. D19 contacts Mg(2+). E45 serves as a coordination point for K(+). Residues E58 and Q104 each contribute to the L-methionine site. The segment at 104–114 (QSPDIAQGVDT) is flexible loop. ATP contacts are provided by residues 179 to 181 (DGK), 250 to 251 (KF), D259, 265 to 266 (RK), A282, and K286. L-methionine is bound at residue D259. K290 serves as a coordination point for L-methionine.

Belongs to the AdoMet synthase family. As to quaternary structure, homotetramer; dimer of dimers. It depends on Mg(2+) as a cofactor. The cofactor is K(+).

It is found in the cytoplasm. The catalysed reaction is L-methionine + ATP + H2O = S-adenosyl-L-methionine + phosphate + diphosphate. The protein operates within amino-acid biosynthesis; S-adenosyl-L-methionine biosynthesis; S-adenosyl-L-methionine from L-methionine: step 1/1. Its function is as follows. Catalyzes the formation of S-adenosylmethionine (AdoMet) from methionine and ATP. The overall synthetic reaction is composed of two sequential steps, AdoMet formation and the subsequent tripolyphosphate hydrolysis which occurs prior to release of AdoMet from the enzyme. This chain is S-adenosylmethionine synthase, found in Mycobacterium avium (strain 104).